A 1518-amino-acid chain; its full sequence is Probable serine/threonine-protein kinase HSL1 (1518 aa).

Disordered stretches follow at residues M1–E43 and R55–L83. The span at R55–K68 shows a compositional bias: polar residues. The Protein kinase domain occupies W81 to I369. Residues L87 to V95 and K110 contribute to the ATP site. The Proton acceptor role is filled by D239. Positions L467–E502 are disordered. A compositionally biased stretch (polar residues) spans K492 to S501. S511 is modified (phosphoserine). Residues S599 to R611 show a composition bias toward low complexity. Positions S599–L651 are disordered. Phosphoserine occurs at positions 629 and 685. The disordered stretch occupies residues E741–P783. Positions E746–D758 are enriched in basic and acidic residues. Polar residues predominate over residues T759–N774. Phosphoserine is present on residues S837 and S866. Residues E856–L876 show a composition bias toward basic and acidic residues. Disordered stretches follow at residues E856–I898, D1005–A1030, A1150–V1170, and S1220–N1243. S1220 is subject to Phosphoserine. Residues E1222–N1243 are compositionally biased toward polar residues. Residue S1250 is modified to Phosphoserine. Positions E1259 to K1291 are disordered. Polar residues predominate over residues H1265–Y1278. A phosphoserine mark is found at S1284, S1287, and S1325.

The protein belongs to the protein kinase superfamily. CAMK Ser/Thr protein kinase family. NIM1 subfamily.

The protein resides in the bud neck. The catalysed reaction is L-seryl-[protein] + ATP = O-phospho-L-seryl-[protein] + ADP + H(+). It carries out the reaction L-threonyl-[protein] + ATP = O-phospho-L-threonyl-[protein] + ADP + H(+). The protein is Probable serine/threonine-protein kinase HSL1 (HSL1) of Saccharomyces cerevisiae (strain ATCC 204508 / S288c) (Baker's yeast).